The sequence spans 273 residues: Shikimate dehydrogenase (NADP(+)) (273 aa).

Shikimate contacts are provided by residues 15–17 and threonine 62; that span reads SQS. Lysine 66 serves as the catalytic Proton acceptor. Glutamate 78 contacts NADP(+). Residues asparagine 87 and aspartate 102 each coordinate shikimate. NADP(+)-binding positions include 127–131, 151–156, and methionine 215; these read GAGGA and NRTVTK. Tyrosine 217 is a shikimate binding site. Residue glycine 239 coordinates NADP(+).

It belongs to the shikimate dehydrogenase family. In terms of assembly, homodimer.

The catalysed reaction is shikimate + NADP(+) = 3-dehydroshikimate + NADPH + H(+). It participates in metabolic intermediate biosynthesis; chorismate biosynthesis; chorismate from D-erythrose 4-phosphate and phosphoenolpyruvate: step 4/7. In terms of biological role, involved in the biosynthesis of the chorismate, which leads to the biosynthesis of aromatic amino acids. Catalyzes the reversible NADPH linked reduction of 3-dehydroshikimate (DHSA) to yield shikimate (SA). The chain is Shikimate dehydrogenase (NADP(+)) from Laribacter hongkongensis (strain HLHK9).